Here is a 203-residue protein sequence, read N- to C-terminus: Lectin (203 aa).

An N-terminal signal peptide occupies residues 1–20; it reads MINILHVIAGLALASVGVDA. The propeptide occupies 21-53; it reads RQVGVGADVLHAVENTIDSITGVEASHSALEVG.

Monomer.

Its function is as follows. N-acetyl-D-glucosamine-specific lectin. Specifically agglutinates rabbit erythrocytes. The chain is Lectin (UPL1) from Ulva pertusa (Sea lettuce).